The primary structure comprises 89 residues: Otospiralin (89 aa).

An N-terminal signal peptide occupies residues 1-21 (MQACMVPGLALCLLLGPLAGA).

This sequence belongs to the otospiralin family. Ear specific.

The protein resides in the secreted. Its function is as follows. May be essential for the survival of the neurosensory epithelium of the inner ear. In Homo sapiens (Human), this protein is Otospiralin (OTOS).